The sequence spans 202 residues: Transcription factor MUTE (202 aa).

The region spanning 1–49 is the bHLH domain; sequence MSHIAVERNRRRQMNEHLKSLRSLTPCFYIKRGDQASIIGGVIEFIKEL.

Homodimer. Leaf epidermis and flowers.

Its subcellular location is the nucleus. Functionally, transcription factor. Together with FMA and SPCH, regulates the stomata formation. Required for the differentiation of stomatal guard cells, by promoting successive asymmetric cell divisions and the formation of guard mother cells. Promotes the conversion of the leaf epidermis into stomata. This Arabidopsis thaliana (Mouse-ear cress) protein is Transcription factor MUTE (MUTE).